The primary structure comprises 379 residues: Acetylornithine aminotransferase (379 aa).

Pyridoxal 5'-phosphate-binding positions include 93–94 and F120; that span reads GA. R123 provides a ligand contact to N(2)-acetyl-L-ornithine. Position 205 to 208 (205 to 208) interacts with pyridoxal 5'-phosphate; it reads DEVQ. K234 carries the post-translational modification N6-(pyridoxal phosphate)lysine. A N(2)-acetyl-L-ornithine-binding site is contributed by S262. T263 lines the pyridoxal 5'-phosphate pocket.

It belongs to the class-III pyridoxal-phosphate-dependent aminotransferase family. ArgD subfamily. In terms of assembly, homodimer. The cofactor is pyridoxal 5'-phosphate.

It is found in the cytoplasm. It catalyses the reaction N(2)-acetyl-L-ornithine + 2-oxoglutarate = N-acetyl-L-glutamate 5-semialdehyde + L-glutamate. It functions in the pathway amino-acid biosynthesis; L-arginine biosynthesis; N(2)-acetyl-L-ornithine from L-glutamate: step 4/4. The polypeptide is Acetylornithine aminotransferase (Streptococcus mutans serotype c (strain ATCC 700610 / UA159)).